The following is a 444-amino-acid chain: Elongation factor 1-alpha (444 aa).

The tr-type G domain maps to 14-235 (KPHLNLAIIG…ALDAIEPPPR (222 aa)). The G1 stretch occupies residues 23 to 30 (GHVDHGKS). 23–30 (GHVDHGKS) is a GTP binding site. Ser30 contributes to the Mg(2+) binding site. Residues 79–83 (GVTIE) form a G2 region. A G3 region spans residues 100-103 (DLPG). GTP-binding positions include 100-104 (DLPGH) and 162-165 (NKMD). The tract at residues 162–165 (NKMD) is G4. The G5 stretch occupies residues 201–203 (SAV).

Belongs to the TRAFAC class translation factor GTPase superfamily. Classic translation factor GTPase family. EF-Tu/EF-1A subfamily.

The protein localises to the cytoplasm. It carries out the reaction GTP + H2O = GDP + phosphate + H(+). In terms of biological role, GTP hydrolase that promotes the GTP-dependent binding of aminoacyl-tRNA to the A-site of ribosomes during protein biosynthesis. This chain is Elongation factor 1-alpha, found in Caldivirga maquilingensis (strain ATCC 700844 / DSM 13496 / JCM 10307 / IC-167).